The following is a 344-amino-acid chain: Zinc metalloproteinase nas-6 (344 aa).

The first 19 residues, 1 to 19, serve as a signal peptide directing secretion; that stretch reads MLDHVLLLTYCLVSTVVRS. The 195-residue stretch at 72 to 266 folds into the Peptidase M12A domain; that stretch reads NALKNKQLTW…VKINKLYSCK (195 aa). 5 disulfides stabilise this stretch: Cys-114-Cys-265, Cys-135-Cys-154, Cys-300-Cys-334, Cys-307-Cys-327, and Cys-314-Cys-331. His-162 contributes to the Zn(2+) binding site. Glu-163 is a catalytic residue. Positions 166 and 172 each coordinate Zn(2+). Positions 300 to 334 constitute a ShKT domain; that stretch reads CVDHFADCPHFAQYCTRASFFFVMKSYCPFTCKHC.

Requires Zn(2+) as cofactor. Expressed in pharyngeal and body wall muscles, intestine, hypodermis and pharyngeal mc2 cells.

It localises to the secreted. Metalloprotease. In Caenorhabditis elegans, this protein is Zinc metalloproteinase nas-6 (nas-6).